The primary structure comprises 125 residues: Ribonuclease P protein component (125 aa).

It belongs to the RnpA family. Consists of a catalytic RNA component (M1 or rnpB) and a protein subunit.

It carries out the reaction Endonucleolytic cleavage of RNA, removing 5'-extranucleotides from tRNA precursor.. RNaseP catalyzes the removal of the 5'-leader sequence from pre-tRNA to produce the mature 5'-terminus. It can also cleave other RNA substrates such as 4.5S RNA. The protein component plays an auxiliary but essential role in vivo by binding to the 5'-leader sequence and broadening the substrate specificity of the ribozyme. This chain is Ribonuclease P protein component, found in Oleidesulfovibrio alaskensis (strain ATCC BAA-1058 / DSM 17464 / G20) (Desulfovibrio alaskensis).